The following is a 425-amino-acid chain: COP9 signalosome complex subunit 1 (425 aa).

Positions 219–379 (ASSGVPPEIY…KSKALQTLEN (161 aa)) constitute a PCI domain.

The protein belongs to the CSN1 family. As to quaternary structure, component of the COP9 signalosome (CSN) complex.

The protein resides in the cytoplasm. It localises to the nucleus. Functionally, component of the COP9 signalosome (CSN) complex that acts as an regulator of the ubiquitin (Ubl) conjugation pathway by mediating the deneddylation of the cullin subunit of SCF-type E3 ubiquitin-protein ligase complexes. The CSN complex is involved in the regulation of the circadian clock through its control of the stability of the SCF(FWD-1) complex. The sequence is that of COP9 signalosome complex subunit 1 (csn-1) from Neurospora crassa (strain ATCC 24698 / 74-OR23-1A / CBS 708.71 / DSM 1257 / FGSC 987).